A 158-amino-acid chain; its full sequence is Endoribonuclease YbeY (158 aa).

Zn(2+) is bound by residues His-119, His-123, and Asp-129.

It belongs to the endoribonuclease YbeY family. Zn(2+) is required as a cofactor.

It localises to the cytoplasm. Its function is as follows. Single strand-specific metallo-endoribonuclease involved in late-stage 70S ribosome quality control and in maturation of the 3' terminus of the 16S rRNA. The chain is Endoribonuclease YbeY from Chlamydia pneumoniae (Chlamydophila pneumoniae).